We begin with the raw amino-acid sequence, 429 residues long: MPKNTKRKRLCPKMNQKLGLKDQDQEIFDLIEQEKARQKENILLIASENFVSQAVLDAQGSILTNKYAEGYPQARYYNGCKNVDQIEKIAIQRATKLFGAKYANVQPHSGSQANMGVFQALLKPGDKILGLSLMDGGHLTHGHKLSFSGGFYEAHFYNVNPQTEMLDYDEIRKVALAVKPKLIIAGYSAYSKTINFKKFRQIADEVNAYLIADIAHIAGLVACGLHPCPFEANADVVTSTMHKTLRGPRGGLILTNKEELFKKINRGIFPGIQGGPCIHTIAAKAVAFQEAMMPSFKEYQKQVIKNANTFAKAFQQKGYRIVSGSTDNHLFLIDVKHKNTEFTGAKIANMLEKINIVVNKNTIPFDQEKPFVTSGIRIGTPAMTTVGFRENDFVAVADLMDKAINHLDDESYLSQIKQQVLALLSKFNK.

(6S)-5,6,7,8-tetrahydrofolate contacts are provided by residues leucine 133 and 137–139 (GHL). Lysine 243 is modified (N6-(pyridoxal phosphate)lysine). Position 259 (glutamate 259) interacts with (6S)-5,6,7,8-tetrahydrofolate.

Belongs to the SHMT family. As to quaternary structure, homodimer. It depends on pyridoxal 5'-phosphate as a cofactor.

The protein resides in the cytoplasm. It carries out the reaction (6R)-5,10-methylene-5,6,7,8-tetrahydrofolate + glycine + H2O = (6S)-5,6,7,8-tetrahydrofolate + L-serine. It participates in one-carbon metabolism; tetrahydrofolate interconversion. The protein operates within amino-acid biosynthesis; glycine biosynthesis; glycine from L-serine: step 1/1. Functionally, catalyzes the reversible interconversion of serine and glycine with tetrahydrofolate (THF) serving as the one-carbon carrier. This reaction serves as the major source of one-carbon groups required for the biosynthesis of purines, thymidylate, methionine, and other important biomolecules. Also exhibits THF-independent aldolase activity toward beta-hydroxyamino acids, producing glycine and aldehydes, via a retro-aldol mechanism. This chain is Serine hydroxymethyltransferase, found in Aster yellows witches'-broom phytoplasma (strain AYWB).